The following is an 88-amino-acid chain: Small ribosomal subunit protein uS15 (88 aa).

This sequence belongs to the universal ribosomal protein uS15 family. As to quaternary structure, part of the 30S ribosomal subunit. Forms a bridge to the 50S subunit in the 70S ribosome, contacting the 23S rRNA.

In terms of biological role, one of the primary rRNA binding proteins, it binds directly to 16S rRNA where it helps nucleate assembly of the platform of the 30S subunit by binding and bridging several RNA helices of the 16S rRNA. Forms an intersubunit bridge (bridge B4) with the 23S rRNA of the 50S subunit in the ribosome. The chain is Small ribosomal subunit protein uS15 from Francisella tularensis subsp. novicida (strain U112).